A 555-amino-acid polypeptide reads, in one-letter code: Glucose-6-phosphate isomerase (555 aa).

D-glucose 6-phosphate-binding positions include G169–S170, S219–T224, Q364, E368, H399, and K521. E368 functions as the Proton donor in the catalytic mechanism. Residues H399 and K521 contribute to the active site.

It belongs to the GPI family. Homodimer.

It localises to the cytoplasm. Its subcellular location is the cytosol. It carries out the reaction alpha-D-glucose 6-phosphate = beta-D-fructose 6-phosphate. The protein operates within carbohydrate degradation; glycolysis; D-glyceraldehyde 3-phosphate and glycerone phosphate from D-glucose: step 2/4. Functionally, in the cytoplasm, catalyzes the conversion of glucose-6-phosphate to fructose-6-phosphate, the second step in glycolysis, and the reverse reaction during gluconeogenesis. The chain is Glucose-6-phosphate isomerase (PGI1) from Candida glabrata (strain ATCC 2001 / BCRC 20586 / JCM 3761 / NBRC 0622 / NRRL Y-65 / CBS 138) (Yeast).